A 688-amino-acid polypeptide reads, in one-letter code: Protein sel-1 homolog 2 (688 aa).

The N-terminal stretch at 1–23 (MKPLSLLIEILIILGVTIKTIKA) is a signal peptide. Residues 24-662 (EEHNKRQKER…RWNWLKLDNT (639 aa)) are Extracellular-facing. An N-linked (GlcNAc...) asparagine glycan is attached at asparagine 34. 11 Sel1-like repeats span residues 107–142 (GDQL…DMGN), 143–178 (LKAM…KEGS), 179–214 (CKAQ…AGGN), 215–250 (MMSQ…DYIA), 297–333 (VQIQ…KAGS), 334–370 (ANAM…SKGN), 371–406 (AIGL…EKGW), 407–442 (PDAQ…QSGQ), 443–478 (PLAI…ELGH), 551–586 (AFAR…NKYH), and 588–623 (AQAM…QTSP). A helical transmembrane segment spans residues 663-683 (IGPHWDLFVIGLIVPGLILLL). The Cytoplasmic portion of the chain corresponds to 684 to 688 (RNHHG).

It belongs to the sel-1 family.

It is found in the membrane. The protein localises to the cell projection. Its subcellular location is the cilium. The protein resides in the nucleus speckle. This chain is Protein sel-1 homolog 2 (SEL1L2), found in Homo sapiens (Human).